A 1032-amino-acid polypeptide reads, in one-letter code: Error-prone DNA polymerase (1032 aa).

Belongs to the DNA polymerase type-C family. DnaE2 subfamily.

It is found in the cytoplasm. It catalyses the reaction DNA(n) + a 2'-deoxyribonucleoside 5'-triphosphate = DNA(n+1) + diphosphate. DNA polymerase involved in damage-induced mutagenesis and translesion synthesis (TLS). It is not the major replicative DNA polymerase. This is Error-prone DNA polymerase from Hahella chejuensis (strain KCTC 2396).